Consider the following 642-residue polypeptide: uncharacterized protein (642 aa).

Positions 15 and 118 each coordinate Mg(2+). Residues 29–149 (VCVDTCVVID…YNLAKAQGIE (121 aa)) form the PINc domain. One can recognise a KH domain in the interval 510-578 (DNSIDLIVPE…ELESTRIYET (69 aa)).

This sequence in the N-terminal section; belongs to the PINc/VapC protein family. The cofactor is Mg(2+).

This is an uncharacterized protein from Methanocaldococcus jannaschii (strain ATCC 43067 / DSM 2661 / JAL-1 / JCM 10045 / NBRC 100440) (Methanococcus jannaschii).